Consider the following 311-residue polypeptide: Probable branched-chain-amino-acid aminotransferase (311 aa).

An N6-(pyridoxal phosphate)lysine modification is found at K160.

The protein belongs to the class-IV pyridoxal-phosphate-dependent aminotransferase family. The cofactor is pyridoxal 5'-phosphate.

It catalyses the reaction L-leucine + 2-oxoglutarate = 4-methyl-2-oxopentanoate + L-glutamate. The enzyme catalyses L-isoleucine + 2-oxoglutarate = (S)-3-methyl-2-oxopentanoate + L-glutamate. It carries out the reaction L-valine + 2-oxoglutarate = 3-methyl-2-oxobutanoate + L-glutamate. Its pathway is amino-acid biosynthesis; L-isoleucine biosynthesis; L-isoleucine from 2-oxobutanoate: step 4/4. It participates in amino-acid biosynthesis; L-leucine biosynthesis; L-leucine from 3-methyl-2-oxobutanoate: step 4/4. It functions in the pathway amino-acid biosynthesis; L-valine biosynthesis; L-valine from pyruvate: step 4/4. Acts on leucine, isoleucine and valine. This chain is Probable branched-chain-amino-acid aminotransferase (ilvE), found in Aquifex aeolicus (strain VF5).